Here is a 131-residue protein sequence, read N- to C-terminus: Profilin-3 (131 aa).

The protein belongs to the profilin family. Occurs in many kinds of cells as a complex with monomeric actin in a 1:1 ratio.

Its subcellular location is the cytoplasm. It is found in the cytoskeleton. Its function is as follows. Binds to actin and affects the structure of the cytoskeleton. At high concentrations, profilin prevents the polymerization of actin, whereas it enhances it at low concentrations. By binding to PIP2, it inhibits the formation of IP3 and DG. The protein is Profilin-3 of Lilium longiflorum (Trumpet lily).